The following is a 475-amino-acid chain: Ataxin-10 (475 aa).

Arg-10 carries the omega-N-methylarginine modification. A Phosphoserine; by AURKB modification is found at Ser-12. Residue Ser-77 is modified to Phosphoserine; by PLK1. Thr-82 is subject to Phosphothreonine; by PLK1. Residue Ser-430 is modified to Phosphoserine.

It belongs to the ataxin-10 family. As to quaternary structure, homooligomer. Interacts with GNB2. Interacts with IQCB1. Interacts with OGT. Post-translationally, polyubiquitinated. Phosphorylation at Ser-12 by AURKB promotes the association of ATXN10 with PLK1. Phosphorylation at Ser-77 and Thr-82 by PLK1 may play a role in the regulation of cytokinesis and may stimulate the proteasome-mediated degradation of ATXN10. As to expression, expressed in the central nervous system.

The protein resides in the cytoplasm. The protein localises to the perinuclear region. Its subcellular location is the midbody. It localises to the cytoskeleton. It is found in the cilium basal body. The protein resides in the microtubule organizing center. The protein localises to the centrosome. Its subcellular location is the centriole. Its function is as follows. May play a role in the regulation of cytokinesis. May play a role in signaling by stimulating protein glycosylation. Induces neuritogenesis by activating the Ras-MAP kinase pathway and is necessary for the survival of cerebellar neurons. Does not appear to play a major role in ciliogenesis. This chain is Ataxin-10 (ATXN10), found in Homo sapiens (Human).